Here is a 277-residue protein sequence, read N- to C-terminus: Glycerol-3-phosphate acyltransferase (277 aa).

Transmembrane regions (helical) follow at residues 3–23 (LFIFLILVGYLMGSINSAIIV), 55–75 (IMVMVFDALKGILPVILAKLL), 79–99 (PVTVAFTALAAVVGHMYPVFF), 111–131 (IGALLAFHFVIGVMVAATWLL), and 155–175 (LILVGNLNIFPPLFMITILVL). Residues 207 to 277 (SPATSAEQEF…PKTKTVKEKE (71 aa)) form a disordered region. A compositionally biased stretch (basic and acidic residues) spans 216–239 (FPGKEVIDTNIDETEKTEQAEAVK). Basic residues-rich tracts occupy residues 240-253 (KPKVKKATTKAKKT) and 262-271 (KPKSTKPKTK).

The protein belongs to the PlsY family. In terms of assembly, probably interacts with PlsX.

It is found in the cell inner membrane. It catalyses the reaction an acyl phosphate + sn-glycerol 3-phosphate = a 1-acyl-sn-glycero-3-phosphate + phosphate. Its pathway is lipid metabolism; phospholipid metabolism. Functionally, catalyzes the transfer of an acyl group from acyl-phosphate (acyl-PO(4)) to glycerol-3-phosphate (G3P) to form lysophosphatidic acid (LPA). This enzyme utilizes acyl-phosphate as fatty acyl donor, but not acyl-CoA or acyl-ACP. This Legionella pneumophila (strain Corby) protein is Glycerol-3-phosphate acyltransferase.